The chain runs to 722 residues: MTTQNFLVEIGTEELPPKALKTLATSFADNVEAELNQAGLSFDKIEWFAAPRRLAVKVLNLATQQPSKEIEKRGPAVSAAFDAEGKPTKAAEGWARGCGITVEQAERIATDKGEWLVHRTKIKGQPTKNLLNDIVANALAKLPIPKPMRWADKTVQFIRPVHTVTMLLGDELIEGEILGVASARTIRGHRFLGEKEFDIQHADQYPQLLRDKGSVVADFNERKAEILAKSQAKATALGGVADIEESLLEEVTSLVEYPNVLAAKFEERFLAVPAEALVYTMKGDQKYFPIYDKDGRLLPHFIFVSNINPEDPTAIIEGNEKVVRPRLTDAEFFFKTDLKQKLVDRLPRLETVLFQQQLGTLKDKTDRIEQLAGEIAKQIGADEAKAKRAGLLSKCDLMTNMVFEFTDTQGVMGMHYARHDGEDEEVAVALNEQYMPRFAGDELPKSLVASAVALADKFDTLTGIFGIGQAPKGSADPFALRRAALGALRIIVEKNLPLDLNDIISKAFDLYKELDNERLRNAPIAKTRGGFSEYPEGYVSFFTRGDDLVPKQKILDEVVDFMLGRFRAWYQDEGIAVDVIQAVLARRPTRPADFDARVRAVSHFRTLDSAEALAAANKRVSNILAKAGAAIGEINLTACVEPAEKALAEAVLALRTEVQPLIAQGDYTAVLDKLANLRAPVDSFFDNVMVNAEDPALRQNRLAILNTLQGLFLQVADISVLQ.

It belongs to the class-II aminoacyl-tRNA synthetase family. In terms of assembly, tetramer of two alpha and two beta subunits.

The protein resides in the cytoplasm. It catalyses the reaction tRNA(Gly) + glycine + ATP = glycyl-tRNA(Gly) + AMP + diphosphate. The chain is Glycine--tRNA ligase beta subunit from Haemophilus influenzae (strain 86-028NP).